A 346-amino-acid chain; its full sequence is UDP-3-O-acylglucosamine N-acyltransferase (346 aa).

The active-site Proton acceptor is the His253.

The protein belongs to the transferase hexapeptide repeat family. LpxD subfamily. As to quaternary structure, homotrimer.

The enzyme catalyses a UDP-3-O-[(3R)-3-hydroxyacyl]-alpha-D-glucosamine + a (3R)-hydroxyacyl-[ACP] = a UDP-2-N,3-O-bis[(3R)-3-hydroxyacyl]-alpha-D-glucosamine + holo-[ACP] + H(+). Its pathway is bacterial outer membrane biogenesis; LPS lipid A biosynthesis. Functionally, catalyzes the N-acylation of UDP-3-O-acylglucosamine using 3-hydroxyacyl-ACP as the acyl donor. Is involved in the biosynthesis of lipid A, a phosphorylated glycolipid that anchors the lipopolysaccharide to the outer membrane of the cell. This chain is UDP-3-O-acylglucosamine N-acyltransferase, found in Rickettsia felis (strain ATCC VR-1525 / URRWXCal2) (Rickettsia azadi).